The sequence spans 514 residues: Membrane-bound lytic murein transglycosylase F (514 aa).

The signal sequence occupies residues 1–30; it reads MKKLKINYLFIGILTLLLAAALWPSIPWFG. The segment at 31–269 is non-LT domain; it reads KTENHIAAIQ…RIEEKYLGHG (239 aa). The segment at 270–514 is LT domain; sequence DDFDYVDTRS…LFTPQKKEEK (245 aa). The active site involves Glu-314.

This sequence in the N-terminal section; belongs to the bacterial solute-binding protein 3 family. The protein in the C-terminal section; belongs to the transglycosylase Slt family.

It is found in the cell outer membrane. The enzyme catalyses Exolytic cleavage of the (1-&gt;4)-beta-glycosidic linkage between N-acetylmuramic acid (MurNAc) and N-acetylglucosamine (GlcNAc) residues in peptidoglycan, from either the reducing or the non-reducing ends of the peptidoglycan chains, with concomitant formation of a 1,6-anhydrobond in the MurNAc residue.. Its function is as follows. Murein-degrading enzyme that degrades murein glycan strands and insoluble, high-molecular weight murein sacculi, with the concomitant formation of a 1,6-anhydromuramoyl product. Lytic transglycosylases (LTs) play an integral role in the metabolism of the peptidoglycan (PG) sacculus. Their lytic action creates space within the PG sacculus to allow for its expansion as well as for the insertion of various structures such as secretion systems and flagella. The polypeptide is Membrane-bound lytic murein transglycosylase F (Salmonella paratyphi B (strain ATCC BAA-1250 / SPB7)).